The sequence spans 89 residues: Small ribosomal subunit protein uS15 (89 aa).

Belongs to the universal ribosomal protein uS15 family. As to quaternary structure, part of the 30S ribosomal subunit. Forms a bridge to the 50S subunit in the 70S ribosome, contacting the 23S rRNA.

Its function is as follows. One of the primary rRNA binding proteins, it binds directly to 16S rRNA where it helps nucleate assembly of the platform of the 30S subunit by binding and bridging several RNA helices of the 16S rRNA. Functionally, forms an intersubunit bridge (bridge B4) with the 23S rRNA of the 50S subunit in the ribosome. The chain is Small ribosomal subunit protein uS15 from Haemophilus influenzae (strain PittGG).